The following is a 146-amino-acid chain: Mite group 2 allergen Der f 2 (146 aa).

The N-terminal stretch at 1–17 is a signal peptide; that stretch reads MISKILCLSLLVAAVVA. Cystine bridges form between Cys-25-Cys-136, Cys-38-Cys-44, and Cys-90-Cys-95.

This sequence belongs to the NPC2 family.

It localises to the secreted. This is Mite group 2 allergen Der f 2 (DERF2) from Dermatophagoides farinae (American house dust mite).